The sequence spans 545 residues: Methionine--tRNA ligase (545 aa).

The short motif at 13-23 (PYANGPLHIGH) is the 'HIGH' region element. Zn(2+) is bound by residues cysteine 144, cysteine 147, cysteine 157, and cysteine 160. The 'KMSKS' region signature appears at 330-334 (KISKS). ATP is bound at residue lysine 333.

The protein belongs to the class-I aminoacyl-tRNA synthetase family. MetG type 1 subfamily. In terms of assembly, monomer. Zn(2+) serves as cofactor.

It is found in the cytoplasm. The catalysed reaction is tRNA(Met) + L-methionine + ATP = L-methionyl-tRNA(Met) + AMP + diphosphate. In terms of biological role, is required not only for elongation of protein synthesis but also for the initiation of all mRNA translation through initiator tRNA(fMet) aminoacylation. This is Methionine--tRNA ligase from Blochmanniella floridana.